Reading from the N-terminus, the 320-residue chain is Aminoacyl tRNA synthase complex-interacting multifunctional protein 2 (320 aa).

At Ser-36 the chain carries Phosphoserine. The tract at residues 82 to 162 (TPDADLDVTN…HTHSSVKNVP (81 aa)) is interaction with PRKN. Residues 162-225 (PENLVKCFGE…FLFSLFGQKH (64 aa)) are interaction with TP53. The region spanning 220 to 317 (LFGQKHNAVT…NLAPFSTALQ (98 aa)) is the GST C-terminal domain.

As to quaternary structure, part of the multisynthetase complex (MSC), a multisubunit complex that groups tRNA ligases for Arg (RARS1), Asp (DARS1), Gln (QARS1), Ile (IARS1), Leu (LARS1), Lys (KARS1), Met (MARS1) the bifunctional ligase for Glu and Pro (EPRS1) and the auxiliary subunits AIMP1/p43, AIMP2/p38 and EEF1E1/p18. Interacts (via N-terminus) with KARS1. Interacts with EPRS1. Forms a linear complex that contains MARS1, EEF1E1, EPRS1 and AIMP2 that is at the core of the multisubunit complex. Binds FUBP1 (via C-terminus). Interacts in both its unphosphorylated and phosphorylated forms with p53/TP53 (via N-terminus) in the nucleus following UV irradiation. Interacts (via N-terminus) with PRKN/parkin (via first RING-type domain). Interacts with TARS3. In terms of processing, phosphorylated on serine residues in response to UV irradiation. Ubiquitinated by PRKN, leading to its degradation by the proteasome.

The protein resides in the cytoplasm. Its subcellular location is the cytosol. It is found in the nucleus. Functionally, required for assembly and stability of the aminoacyl-tRNA synthase complex. Mediates ubiquitination and degradation of FUBP1, a transcriptional activator of MYC, leading to MYC down-regulation which is required for aveolar type II cell differentiation. Blocks MDM2-mediated ubiquitination and degradation of p53/TP53. Functions as a proapoptotic factor. The sequence is that of Aminoacyl tRNA synthase complex-interacting multifunctional protein 2 (Aimp2) from Mus musculus (Mouse).